We begin with the raw amino-acid sequence, 172 residues long: Propanediol dehydratase small subunit (172 aa).

The protein belongs to the diol/glycerol dehydratase small subunit family. In terms of assembly, the propanediol dehydratase enzyme is a heterotrimeric complex composed of a large (PduC), a medium (PduD) and a small (PduE) subunit. Requires adenosylcob(III)alamin as cofactor.

Its subcellular location is the bacterial microcompartment. The enzyme catalyses propane-1,2-diol = propanal + H2O. Its pathway is polyol metabolism; 1,2-propanediol degradation. Part of the PduCDE complex that catalyzes the dehydration of 1,2-propanediol (1,2-PD) to propionaldehyde. Localized in the bacterial microcompartment (BMC) dedicated to 1,2-PD degradation. In terms of biological role, expression of a cosmid containing the full 21-gene pdu operon in E.coli allows E.coli to grow on 1,2-propanediol (1,2-PD) with the appearance of BMCs in its cytoplasm. Its function is as follows. The 1,2-PD-specific bacterial microcompartment (BMC) concentrates low levels of 1,2-PD catabolic enzymes, concentrates volatile reaction intermediates thus enhancing pathway flux and keeps the level of toxic, mutagenic propionaldehyde low. This is Propanediol dehydratase small subunit from Citrobacter freundii.